A 170-amino-acid polypeptide reads, in one-letter code: Photosystem II extrinsic protein V (170 aa).

A signal peptide spans Met1–Ala34. Heme c is bound by residues Cys70, Cys73, His74, and His125.

It belongs to the cytochrome c family. PsbV subfamily. In terms of assembly, PSII is composed of 1 copy each of membrane proteins PsbA, PsbB, PsbC, PsbD, PsbE, PsbF, PsbH, PsbI, PsbJ, PsbK, PsbL, PsbM, PsbT, PsbX, PsbY, PsbZ, Psb30/Ycf12, peripheral proteins PsbO, CyanoQ (PsbQ), PsbU, PsbV and a large number of cofactors. It forms dimeric complexes. Heme c is required as a cofactor.

Its subcellular location is the cellular thylakoid membrane. Its function is as follows. One of the extrinsic, lumenal subunits of photosystem II (PSII). PSII is a light-driven water plastoquinone oxidoreductase, using light energy to abstract electrons from H(2)O, generating a proton gradient subsequently used for ATP formation. The extrinsic proteins stabilize the structure of photosystem II oxygen-evolving complex (OEC), the ion environment of oxygen evolution and protect the OEC against heat-induced inactivation. Low-potential cytochrome c that plays a role in the OEC of PSII. The chain is Photosystem II extrinsic protein V from Picosynechococcus sp. (strain ATCC 27264 / PCC 7002 / PR-6) (Agmenellum quadruplicatum).